A 283-amino-acid polypeptide reads, in one-letter code: MAFQGTSRTLTQQSSAATSDELQKILFSPEAIKKMATECDLGRHHWMRADNAISVRPLVPEVTHGRIASFFKSGYDAGELSSKGYMSVPQVLCAVTRTVSTDAEGSLRIYLADLGDKELSPIDGQCVTLHNHDLPALVSFQPTYDCPMETVGNRKRCFAVVIERHGYIGYTGTTASVCSNWQARFSSKNNNYTHIAAGKTLVLPFNRLAEQTKPSAVARLLKSQLNNIESSQYVLTNAKINQNARSESEELNVESPPIAIGSSSASRSETFRPQVVNGTLVFS.

The protein belongs to the cucumovirus movement protein family.

Its subcellular location is the host cell junction. It localises to the host plasmodesma. Its function is as follows. Transports viral genome to neighboring plant cells directly through plasmosdesmata, without any budding. The movement protein allows efficient cell to cell propagation, by bypassing the host cell wall barrier. Acts by forming a tubular structure at the host plasmodesmata, enlarging it enough to allow free passage of virion capsids. In Cucumis sativus (Cucumber), this protein is Movement protein.